The sequence spans 254 residues: Thiazole synthase (254 aa).

The active-site Schiff-base intermediate with DXP is K96. 1-deoxy-D-xylulose 5-phosphate-binding positions include G157, 183-184 (AG), and 205-206 (NT).

Belongs to the ThiG family. Homotetramer. Forms heterodimers with either ThiH or ThiS.

The protein localises to the cytoplasm. The enzyme catalyses [ThiS sulfur-carrier protein]-C-terminal-Gly-aminoethanethioate + 2-iminoacetate + 1-deoxy-D-xylulose 5-phosphate = [ThiS sulfur-carrier protein]-C-terminal Gly-Gly + 2-[(2R,5Z)-2-carboxy-4-methylthiazol-5(2H)-ylidene]ethyl phosphate + 2 H2O + H(+). The protein operates within cofactor biosynthesis; thiamine diphosphate biosynthesis. Catalyzes the rearrangement of 1-deoxy-D-xylulose 5-phosphate (DXP) to produce the thiazole phosphate moiety of thiamine. Sulfur is provided by the thiocarboxylate moiety of the carrier protein ThiS. In vitro, sulfur can be provided by H(2)S. The polypeptide is Thiazole synthase (Bacillus velezensis (strain DSM 23117 / BGSC 10A6 / LMG 26770 / FZB42) (Bacillus amyloliquefaciens subsp. plantarum)).